We begin with the raw amino-acid sequence, 1071 residues long: Carbamoyl phosphate synthase large chain (1071 aa).

Residues 1 to 403 (MPKRTDLKSI…SFQKALRGLE (403 aa)) form a carboxyphosphate synthetic domain region. 12 residues coordinate ATP: Arg-129, Arg-169, Gly-175, Gly-176, Gln-208, Val-210, Glu-215, Gly-241, Val-242, His-243, Gln-285, and Glu-299. The region spanning 133–328 (KEAMEKIGLS…IAKVAAKLAV (196 aa)) is the ATP-grasp 1 domain. Mg(2+) contacts are provided by Gln-285, Glu-299, and Asn-301. The Mn(2+) site is built by Gln-285, Glu-299, and Asn-301. An oligomerization domain region spans residues 404-548 (TGLCGFNPRS…YSTYEEECEA (145 aa)). A carbamoyl phosphate synthetic domain region spans residues 549–930 (RPSDRKKVMI…AYYKAQLGAG (382 aa)). Residues 673 to 864 (QKVLNDLGLR…LAKVGARCMA (192 aa)) enclose the ATP-grasp 2 domain. Residues Arg-709, Phe-748, Leu-750, Glu-755, Gly-780, Ile-781, His-782, Ser-783, Gln-823, and Glu-835 each contribute to the ATP site. Residues Gln-823, Glu-835, and Asn-837 each coordinate Mg(2+). Mn(2+) is bound by residues Gln-823, Glu-835, and Asn-837. An MGS-like domain is found at 931–1071 (ERLNPTGKIF…ELHGRLKNRS (141 aa)). Residues 931 to 1071 (ERLNPTGKIF…ELHGRLKNRS (141 aa)) form an allosteric domain region.

The protein belongs to the CarB family. As to quaternary structure, composed of two chains; the small (or glutamine) chain promotes the hydrolysis of glutamine to ammonia, which is used by the large (or ammonia) chain to synthesize carbamoyl phosphate. Tetramer of heterodimers (alpha,beta)4. Mg(2+) serves as cofactor. It depends on Mn(2+) as a cofactor.

It catalyses the reaction hydrogencarbonate + L-glutamine + 2 ATP + H2O = carbamoyl phosphate + L-glutamate + 2 ADP + phosphate + 2 H(+). The enzyme catalyses hydrogencarbonate + NH4(+) + 2 ATP = carbamoyl phosphate + 2 ADP + phosphate + 2 H(+). It participates in amino-acid biosynthesis; L-arginine biosynthesis; carbamoyl phosphate from bicarbonate: step 1/1. Its pathway is pyrimidine metabolism; UMP biosynthesis via de novo pathway; (S)-dihydroorotate from bicarbonate: step 1/3. Its function is as follows. Large subunit of the glutamine-dependent carbamoyl phosphate synthetase (CPSase). CPSase catalyzes the formation of carbamoyl phosphate from the ammonia moiety of glutamine, carbonate, and phosphate donated by ATP, constituting the first step of 2 biosynthetic pathways, one leading to arginine and/or urea and the other to pyrimidine nucleotides. The large subunit (synthetase) binds the substrates ammonia (free or transferred from glutamine from the small subunit), hydrogencarbonate and ATP and carries out an ATP-coupled ligase reaction, activating hydrogencarbonate by forming carboxy phosphate which reacts with ammonia to form carbamoyl phosphate. The protein is Carbamoyl phosphate synthase large chain of Neisseria meningitidis serogroup A / serotype 4A (strain DSM 15465 / Z2491).